The sequence spans 387 residues: Phosphoglycerate kinase (387 aa).

Residues 21–23, R36, 59–62, R113, and R146 contribute to the substrate site; these read DLN and HLGR. ATP is bound by residues K197, E314, and 340–343; that span reads GGDT.

Belongs to the phosphoglycerate kinase family. As to quaternary structure, monomer.

It localises to the cytoplasm. It carries out the reaction (2R)-3-phosphoglycerate + ATP = (2R)-3-phospho-glyceroyl phosphate + ADP. It functions in the pathway carbohydrate degradation; glycolysis; pyruvate from D-glyceraldehyde 3-phosphate: step 2/5. This chain is Phosphoglycerate kinase (pgk), found in Pasteurella multocida (strain Pm70).